Consider the following 573-residue polypeptide: Developmental and secondary metabolism regulator VEL1 (573 aa).

Residues 26–220 enclose the Velvet domain; sequence NRHLWYQLTV…ADQGCRVRIR (195 aa). The Nuclear localization signal signature appears at 40–45; it reads ERARAC. The interval 222–520 is disordered; it reads DVRMRKRDGK…STGGKRKHDH (299 aa). A compositionally biased stretch (basic and acidic residues) spans 230-245; it reads GKGSGFDRRGEEEYSR. Pro residues-rich tracts occupy residues 291–310 and 341–351; these read APPP…PPAA and APIPPATPTGP. Over residues 352 to 363 the composition is skewed to low complexity; the sequence is YPTSSAAPSPYA. A compositionally biased stretch (pro residues) spans 379–389; that stretch reads PPAPSASPAPP. Residues 432–448 are compositionally biased toward polar residues; that stretch reads TPASQPTYSTPASQPTY. Residues 458–475 are compositionally biased toward pro residues; the sequence is SAPPPAPYSAPAPPPPRP. Positions 476 to 504 are PEST; that stretch reads SMSQSSLAPLKIASLVSPLPPIEAQTEPL.

The protein belongs to the velvet family. VeA subfamily. As to quaternary structure, component of the heterotrimeric velvet complex composed of LAE1, VEL1 and VEL2; VEL1 acting as a bridging protein between LAE1 and VEL2. Interacts with LAE1.

The protein localises to the nucleus. Its subcellular location is the cytoplasm. Its function is as follows. Component of the velvet transcription factor complex that controls sexual/asexual developmental ratio in response to light, promoting sexual development in the darkness while stimulating asexual sporulation under illumination. The velvet complex hat acts as a global regulator for secondary metabolite gene expression. Regulates expression of the carbohydrate-active enzyme gene clusters. The protein is Developmental and secondary metabolism regulator VEL1 of Hypocrea jecorina (strain QM6a) (Trichoderma reesei).